Here is a 323-residue protein sequence, read N- to C-terminus: tRNA U34 carboxymethyltransferase (323 aa).

Carboxy-S-adenosyl-L-methionine contacts are provided by residues Lys91, Trp105, Lys110, Gly130, 152 to 154 (DPT), 181 to 182 (IE), Met196, Tyr200, and Arg315.

Belongs to the class I-like SAM-binding methyltransferase superfamily. CmoB family. Homotetramer.

It carries out the reaction carboxy-S-adenosyl-L-methionine + 5-hydroxyuridine(34) in tRNA = 5-carboxymethoxyuridine(34) in tRNA + S-adenosyl-L-homocysteine + H(+). In terms of biological role, catalyzes carboxymethyl transfer from carboxy-S-adenosyl-L-methionine (Cx-SAM) to 5-hydroxyuridine (ho5U) to form 5-carboxymethoxyuridine (cmo5U) at position 34 in tRNAs. The protein is tRNA U34 carboxymethyltransferase of Escherichia coli O139:H28 (strain E24377A / ETEC).